The sequence spans 443 residues: Ribosomal protein uS12 methylthiotransferase RimO (443 aa).

The MTTase N-terminal domain maps to Pro8–Pro118. Residues Cys17, Cys53, Cys82, Cys150, Cys154, and Cys157 each coordinate [4Fe-4S] cluster. One can recognise a Radical SAM core domain in the interval Leu136 to Glu373. The region spanning Gln376 to Glu442 is the TRAM domain.

It belongs to the methylthiotransferase family. RimO subfamily. The cofactor is [4Fe-4S] cluster.

It is found in the cytoplasm. The catalysed reaction is L-aspartate(89)-[ribosomal protein uS12]-hydrogen + (sulfur carrier)-SH + AH2 + 2 S-adenosyl-L-methionine = 3-methylsulfanyl-L-aspartate(89)-[ribosomal protein uS12]-hydrogen + (sulfur carrier)-H + 5'-deoxyadenosine + L-methionine + A + S-adenosyl-L-homocysteine + 2 H(+). Functionally, catalyzes the methylthiolation of an aspartic acid residue of ribosomal protein uS12. The chain is Ribosomal protein uS12 methylthiotransferase RimO from Proteus mirabilis (strain HI4320).